We begin with the raw amino-acid sequence, 551 residues long: DNA mismatch repair protein MutL (551 aa).

The protein belongs to the DNA mismatch repair MutL/HexB family.

Its function is as follows. This protein is involved in the repair of mismatches in DNA. It is required for dam-dependent methyl-directed DNA mismatch repair. May act as a 'molecular matchmaker', a protein that promotes the formation of a stable complex between two or more DNA-binding proteins in an ATP-dependent manner without itself being part of a final effector complex. This chain is DNA mismatch repair protein MutL, found in Thermosipho melanesiensis (strain DSM 12029 / CIP 104789 / BI429).